The following is a 470-amino-acid chain: Poly(A) polymerase catalytic subunit (470 aa).

Active-site residues include Asp-192 and Asp-194.

It belongs to the poxviridae poly(A) polymerase catalytic subunit family. As to quaternary structure, heterodimer of a large (catalytic) subunit and a small (regulatory) subunit.

It catalyses the reaction RNA(n) + ATP = RNA(n)-3'-adenine ribonucleotide + diphosphate. Its function is as follows. Polymerase that creates the 3'-poly(A) tail of mRNA's. The polypeptide is Poly(A) polymerase catalytic subunit (PAPL) (Sus scrofa (Pig)).